The following is a 332-amino-acid chain: Acryloyl-coenzyme A reductase (332 aa).

Residue Cys-38 coordinates Zn(2+). Tyr-39 serves as a coordination point for NADP(+). Positions 60, 90, 93, 96, 104, and 146 each coordinate Zn(2+). Residues 172–175 (SGGV) and 194–196 (TTS) contribute to the NADP(+) site.

It belongs to the zinc-containing alcohol dehydrogenase family. Monomer. Requires Zn(2+) as cofactor.

The catalysed reaction is propanoyl-CoA + NADP(+) = acryloyl-CoA + NADPH + H(+). Functionally, plays a role in autotrophic carbon fixation via the 3-hydroxypropionate/4-hydroxybutyrate cycle. Catalyzes the acryloyl-CoA dependent NADPH oxidation and formation of propionyl-CoA. The protein is Acryloyl-coenzyme A reductase of Metallosphaera sedula (strain ATCC 51363 / DSM 5348 / JCM 9185 / NBRC 15509 / TH2).